Here is a 116-residue protein sequence, read N- to C-terminus: UPF0102 protein PERMA_0362 (116 aa).

The protein belongs to the UPF0102 family.

The protein is UPF0102 protein PERMA_0362 of Persephonella marina (strain DSM 14350 / EX-H1).